The chain runs to 97 residues: Apolipoprotein C-II (97 aa).

The signal sequence occupies residues 1-22 (MGSRFFLALFLALLVLGNEVQG). The interval 63 to 71 (SVDEKLRDM) is lipid binding. The tract at residues 75-97 (SSAAMTTYAGIFTDQLLTLLKGE) is lipoprotein lipase cofactor.

This sequence belongs to the apolipoprotein C2 family. Proapolipoprotein C-II is synthesized as a sialic acid containing glycoprotein which is subsequently desialylated prior to its proteolytic processing. Post-translationally, proapolipoprotein C-II, the major form found in plasma undergoes proteolytic cleavage of its N-terminal hexapeptide to generate the mature form apolipoprotein C-II, which occurs as the minor form in plasma.

Its subcellular location is the secreted. In terms of biological role, component of chylomicrons, very low-density lipoproteins (VLDL), low-density lipoproteins (LDL), and high-density lipoproteins (HDL) in plasma. Plays an important role in lipoprotein metabolism as an activator of lipoprotein lipase. The chain is Apolipoprotein C-II (Apoc2) from Rattus norvegicus (Rat).